We begin with the raw amino-acid sequence, 247 residues long: Carboxy-S-adenosyl-L-methionine synthase (247 aa).

S-adenosyl-L-methionine contacts are provided by residues Tyr40, 65–67, 90–91, 122–123, Asn137, and Arg204; these read GAS, DN, and DI.

The protein belongs to the class I-like SAM-binding methyltransferase superfamily. Cx-SAM synthase family. In terms of assembly, homodimer.

It catalyses the reaction prephenate + S-adenosyl-L-methionine = carboxy-S-adenosyl-L-methionine + 3-phenylpyruvate + H2O. In terms of biological role, catalyzes the conversion of S-adenosyl-L-methionine (SAM) to carboxy-S-adenosyl-L-methionine (Cx-SAM). This Pseudomonas putida (strain ATCC 700007 / DSM 6899 / JCM 31910 / BCRC 17059 / LMG 24140 / F1) protein is Carboxy-S-adenosyl-L-methionine synthase.